The following is a 418-amino-acid chain: Glutamyl-tRNA reductase (418 aa).

Residues 49–52 (TCNR), S109, 114–116 (EPQ), and Q120 contribute to the substrate site. C50 acts as the Nucleophile in catalysis. Residue 189–194 (GAGETI) coordinates NADP(+).

Belongs to the glutamyl-tRNA reductase family. Homodimer.

The catalysed reaction is (S)-4-amino-5-oxopentanoate + tRNA(Glu) + NADP(+) = L-glutamyl-tRNA(Glu) + NADPH + H(+). It functions in the pathway porphyrin-containing compound metabolism; protoporphyrin-IX biosynthesis; 5-aminolevulinate from L-glutamyl-tRNA(Glu): step 1/2. In terms of biological role, catalyzes the NADPH-dependent reduction of glutamyl-tRNA(Glu) to glutamate 1-semialdehyde (GSA). In Klebsiella pneumoniae subsp. pneumoniae (strain ATCC 700721 / MGH 78578), this protein is Glutamyl-tRNA reductase.